The sequence spans 684 residues: Acetophenone carboxylase delta subunit (684 aa).

Belongs to the oxoprolinase family. Acetophenone carboxylase consists of five subunits; a heterooctameric subcomplex of two alpha (Apc1), two beta (Apc2), two gamma (Apc3) and two delta (Apc4) subunits assembles with the epsilon (Apc5) subunit in an unknown stoichiometry. Requires Mg(2+) as cofactor. Mn(2+) is required as a cofactor.

The protein resides in the cytoplasm. It catalyses the reaction acetophenone + hydrogencarbonate + 2 ATP + H2O = 3-oxo-3-phenylpropanoate + 2 ADP + 2 phosphate + 2 H(+). Its activity is regulated as follows. Inhibited by zinc ions, carbamoylphosphate and beta,gamma-imido-ATP. Functionally, catalyzes the carboxylation of acetophenone to form 3-oxo-3-phenylpropanoate (benzoylacetate) in the anaerobic catabolism of ethylbenzene. Also carboxylates propiophenone at the same rate and 4-acetyl-pyridine at lower rates. The polypeptide is Acetophenone carboxylase delta subunit (apc4) (Aromatoleum aromaticum (strain DSM 19018 / LMG 30748 / EbN1) (Azoarcus sp. (strain EbN1))).